The sequence spans 364 residues: Fructose-bisphosphate aldolase C (364 aa).

Tyrosine 5 bears the Phosphotyrosine mark. 3 positions are modified to phosphoserine: serine 36, serine 39, and serine 45. Arginine 56 provides a ligand contact to substrate. At lysine 111 the chain carries N6-acetyllysine. At serine 132 the chain carries Phosphoserine. Residue lysine 147 coordinates substrate. Glutamate 188 acts as the Proton acceptor in catalysis. Residue lysine 230 is the Schiff-base intermediate with dihydroxyacetone-P of the active site.

This sequence belongs to the class I fructose-bisphosphate aldolase family. As to quaternary structure, homotetramer. Interacts with ATP6V1E1.

The catalysed reaction is beta-D-fructose 1,6-bisphosphate = D-glyceraldehyde 3-phosphate + dihydroxyacetone phosphate. It participates in carbohydrate degradation; glycolysis; D-glyceraldehyde 3-phosphate and glycerone phosphate from D-glucose: step 4/4. This chain is Fructose-bisphosphate aldolase C (ALDOC), found in Macaca fascicularis (Crab-eating macaque).